A 509-amino-acid polypeptide reads, in one-letter code: Zinc finger CCCH-type with G patch domain-containing protein (509 aa).

The tract at residues 41–61 is disordered; it reads TRGSEPEATSDTKTPETSDNI. Over residues 47–58 the composition is skewed to polar residues; the sequence is EATSDTKTPETS. Residues 155-178 form a C3H1-type zinc finger; it reads PCNYFLEGECRFDEVRCRYSHGAL. Residues 254-278 are disordered; that stretch reads DDDLTSESEESNETDGSDAGNDSDM. The G-patch domain occupies 310-356; that stretch reads TRGIGSKLMANMGYIHGTGLGSDGRGIVTPVSAQILPQGRSLDACME. The interval 410 to 433 is disordered; it reads GSQQTENANKKTKPNNLQQHSNKT. Positions 423-433 are enriched in polar residues; it reads PNNLQQHSNKT.

It is found in the nucleus. Its function is as follows. Transcription repressor. This Drosophila mojavensis (Fruit fly) protein is Zinc finger CCCH-type with G patch domain-containing protein.